Here is a 445-residue protein sequence, read N- to C-terminus: ATP synthase subunit b-delta (445 aa).

Residues methionine 1–alanine 168 form an ATP synthase subunit b region. Residues isoleucine 3–valine 23 traverse the membrane as a helical segment. An ATP synthase subunit delta region spans residues threonine 169 to aspartate 445.

It in the N-terminal section; belongs to the ATPase B chain family. The protein in the C-terminal section; belongs to the ATPase delta chain family. As to quaternary structure, F-type ATPases have 2 components, F(1) - the catalytic core - and F(0) - the membrane proton channel. F(1) has five subunits: alpha(3), beta(3), gamma(1), delta(1), epsilon(1). F(0) has three main subunits: a(1), b(2) and c(10-14). The alpha and beta chains form an alternating ring which encloses part of the gamma chain. F(1) is attached to F(0) by a central stalk formed by the gamma and epsilon chains, while a peripheral stalk is formed by the delta and b chains.

The protein localises to the cell membrane. Its function is as follows. F(1)F(0) ATP synthase produces ATP from ADP in the presence of a proton or sodium gradient. F-type ATPases consist of two structural domains, F(1) containing the extramembraneous catalytic core and F(0) containing the membrane proton channel, linked together by a central stalk and a peripheral stalk. During catalysis, ATP synthesis in the catalytic domain of F(1) is coupled via a rotary mechanism of the central stalk subunits to proton translocation. Functionally, this fusion protein includes a component of the F(0) channel (subunit b) and of the F(1) subunit (subunit delta). Two copies of subunit b and one of delta together form the peripheral 'stator' stalk which links F(1) to F(0). This Mycolicibacterium smegmatis (strain ATCC 700084 / mc(2)155) (Mycobacterium smegmatis) protein is ATP synthase subunit b-delta (atpFH).